A 626-amino-acid chain; its full sequence is Colicin-Ia (626 aa).

The tract at residues 23–225 is translocation (T); sequence EIMAVDIYVN…TRLSELEKNG (203 aa). The span at 276–286 shows a compositional bias: polar residues; sequence QQLTQQKNTPD. A disordered region spans residues 276–308; sequence QQLTQQKNTPDGKTIVSPEKFPGRSSTNHSIVV. Residues 282-385 are receptor-binding (R); that stretch reads KNTPDGKTIV…LRQRLLDARN (104 aa). The tract at residues 450 to 626 is channel (C); the sequence is KDAINFTTEF…VEKANKFWGI (177 aa). 2 helical membrane passes run 580–594 and 597–612; these read ATALVALVFSILTGS and GIIGYGLLMAVTGALI.

Belongs to the channel forming colicin family.

Its subcellular location is the cell membrane. Functionally, this colicin is a channel-forming colicin. This class of transmembrane toxins depolarize the cytoplasmic membrane, leading to dissipation of cellular energy. In terms of biological role, colicins are polypeptide toxins produced by and active against E.coli and closely related bacteria. The protein is Colicin-Ia (cia) of Escherichia coli.